The chain runs to 154 residues: Protein X (154 aa).

The tract at residues Pro-68–Phe-117 is mitochondrial targeting sequence.

Belongs to the orthohepadnavirus protein X family. May form homodimer. May interact with host CEBPA, CFLAR, CREB1, DDB1, E4F1, HBXIP, HSPD1/HSP60, NFKBIA, POLR2E and SMAD4. Interacts with host SMC5-SMC6 complex and induces its degradation. Interacts with host TRPC4AP; leading to prevent ubiquitination of TRPC4AP. Interacts with host PLSCR1; this interaction promotes ubiquitination and degradation of HBx and impairs HBx-mediated cell proliferation. In terms of processing, a fraction may be phosphorylated in insect cells and HepG2 cells, a human hepatoblastoma cell line. Phosphorylated in vitro by host protein kinase C or mitogen-activated protein kinase. N-acetylated in insect cells.

It localises to the host cytoplasm. The protein resides in the host nucleus. Its subcellular location is the host mitochondrion. Functionally, multifunctional protein that plays a role in silencing host antiviral defenses and promoting viral transcription. Does not seem to be essential for HBV infection. May be directly involved in development of cirrhosis and liver cancer (hepatocellular carcinoma). Most of cytosolic activities involve modulation of cytosolic calcium. The effect on apoptosis is controversial depending on the cell types in which the studies have been conducted. May induce apoptosis by localizing in mitochondria and causing loss of mitochondrial membrane potential. May also modulate apoptosis by binding host CFLAR, a key regulator of the death-inducing signaling complex (DISC). Promotes viral transcription by using the host E3 ubiquitin ligase DDB1 to target the SMC5-SMC6 complex to proteasomal degradation. This host complex would otherwise bind to viral episomal DNA, and prevents its transcription. Moderately stimulates transcription of many different viral and cellular transcription elements. Promoters and enhancers stimulated by HBx contain DNA binding sites for NF-kappa-B, AP-1, AP-2, c-EBP, ATF/CREB, or the calcium-activated factor NF-AT. This chain is Protein X, found in Homo sapiens (Human).